The sequence spans 155 residues: RNA pyrophosphohydrolase (155 aa).

The Nudix hydrolase domain maps to Lys-5–Ala-147. Positions Gly-42–Gly-63 match the Nudix box motif.

It belongs to the Nudix hydrolase family. RppH subfamily. Requires a divalent metal cation as cofactor.

Accelerates the degradation of transcripts by removing pyrophosphate from the 5'-end of triphosphorylated RNA, leading to a more labile monophosphorylated state that can stimulate subsequent ribonuclease cleavage. This is RNA pyrophosphohydrolase from Helicobacter pylori (strain G27).